Here is a 134-residue protein sequence, read N- to C-terminus: Ribosome-binding factor A (134 aa).

Belongs to the RbfA family. In terms of assembly, monomer. Binds 30S ribosomal subunits, but not 50S ribosomal subunits or 70S ribosomes.

It is found in the cytoplasm. Its function is as follows. One of several proteins that assist in the late maturation steps of the functional core of the 30S ribosomal subunit. Associates with free 30S ribosomal subunits (but not with 30S subunits that are part of 70S ribosomes or polysomes). Required for efficient processing of 16S rRNA. May interact with the 5'-terminal helix region of 16S rRNA. This is Ribosome-binding factor A from Synechococcus sp. (strain CC9311).